The following is a 990-amino-acid chain: Glycine dehydrogenase (decarboxylating) (990 aa).

The residue at position 726 (Lys-726) is an N6-(pyridoxal phosphate)lysine.

It belongs to the GcvP family. The glycine cleavage system is composed of four proteins: P, T, L and H. Pyridoxal 5'-phosphate serves as cofactor.

It carries out the reaction N(6)-[(R)-lipoyl]-L-lysyl-[glycine-cleavage complex H protein] + glycine + H(+) = N(6)-[(R)-S(8)-aminomethyldihydrolipoyl]-L-lysyl-[glycine-cleavage complex H protein] + CO2. In terms of biological role, the glycine cleavage system catalyzes the degradation of glycine. The P protein binds the alpha-amino group of glycine through its pyridoxal phosphate cofactor; CO(2) is released and the remaining methylamine moiety is then transferred to the lipoamide cofactor of the H protein. The chain is Glycine dehydrogenase (decarboxylating) from Rhodopseudomonas palustris (strain ATCC BAA-98 / CGA009).